The chain runs to 375 residues: ELAV-like protein 2 (375 aa).

RRM domains lie at 67–145 (TNLI…YARP), 153–233 (ANLY…FANN), and 292–370 (WCIF…FKTS).

Belongs to the RRM elav family. In terms of assembly, part of a ribonucleoprotein (RNP) complex, at least composed of elavl1/elrA and/or elavl2/elrB, igf2bp3/vg1RBP, ddx6/Xp54, ybx2/frgy2, lsm14b/rap55b and, in a subset of RNP complexes, stau1/staufen. Binds RNA as a homooligomer.

It localises to the cytoplasm. The protein resides in the cell cortex. In terms of biological role, binds to poly-U elements and AU-rich elements (AREs) in the 3'-UTR of target mRNAs. Required for the vegetal localization of vg1 mRNA. Probably required for nervous system development. This Xenopus tropicalis (Western clawed frog) protein is ELAV-like protein 2.